A 299-amino-acid polypeptide reads, in one-letter code: MVAVTELGYLGLTVTNLDAWRSYAAEVAGMEIVDEGEGDRLYLRMDQWHHRIVLHASDSDDLAYLGWRVADPVEFDAMVAKLTAAGISLTVASEAEARERRVLGLAKLADPGGNPTEIFYGPQVDTHKPFHPGRPMYGKFVTGSEGIGHCILRQDDVPAAAAFYGLLGLRGSVEYHLQLPNGMVAQPYFMHCNERQHSVAFGLGPMEKRINHLMFEYTDLDDLGLAHDIVRARKIDVALQLGKHANDQALTFYCANPSGWLWEFGWGARKAPSQQEYYTRDIFGHGNEAAGYGMDIPLG.

2 consecutive VOC domains span residues 6-121 (ELGY…IFYG) and 146-267 (GIGH…FGWG). Fe cation is bound by residues H149, H212, and E263.

This sequence belongs to the extradiol ring-cleavage dioxygenase family. Homooctamer. Fe(2+) is required as a cofactor.

It catalyses the reaction biphenyl-2,3-diol + O2 = 2-hydroxy-6-oxo-6-phenylhexa-2,4-dienoate + H(+). It participates in xenobiotic degradation; biphenyl degradation; 2-hydroxy-2,4-pentadienoate and benzoate from biphenyl: step 3/4. In Sphingomonas paucimobilis (Pseudomonas paucimobilis), this protein is Biphenyl-2,3-diol 1,2-dioxygenase (bphC).